The primary structure comprises 336 residues: 3-isopropylmalate dehydrogenase (336 aa).

The substrate site is built by Arg87, Arg97, Arg121, and Asp211. Residues Asp211, Asp235, and Asp239 each coordinate Mg(2+). Gly271–Asp283 serves as a coordination point for NAD(+).

It belongs to the isocitrate and isopropylmalate dehydrogenases family. LeuB type 2 subfamily. In terms of assembly, homodimer. It depends on Mg(2+) as a cofactor. Requires Mn(2+) as cofactor.

The protein localises to the cytoplasm. The enzyme catalyses (2R,3S)-3-isopropylmalate + NAD(+) = 4-methyl-2-oxopentanoate + CO2 + NADH. The protein operates within amino-acid biosynthesis; L-leucine biosynthesis; L-leucine from 3-methyl-2-oxobutanoate: step 3/4. In terms of biological role, catalyzes the oxidation of 3-carboxy-2-hydroxy-4-methylpentanoate (3-isopropylmalate) to 3-carboxy-4-methyl-2-oxopentanoate. The product decarboxylates to 4-methyl-2 oxopentanoate. In Mycolicibacterium paratuberculosis (strain ATCC BAA-968 / K-10) (Mycobacterium paratuberculosis), this protein is 3-isopropylmalate dehydrogenase.